We begin with the raw amino-acid sequence, 173 residues long: Lipoprotein signal peptidase (173 aa).

Helical transmembrane passes span 14–34, 44–64, 72–92, and 98–118; these read LAWLWLTVLIVAVDQVSKYYF, IIVIPDYFSWTLAYNTGAAFS, WQRWLFALIAVVVSAVLVVWL, and DDTWLAIALALVLGGALGNLY. Catalysis depends on residues Asp-128 and Asp-147. Residues 139 to 159 form a helical membrane-spanning segment; that stretch reads YFPAFNVADSAITVGAIMLAL.

It belongs to the peptidase A8 family.

Its subcellular location is the cell inner membrane. The enzyme catalyses Release of signal peptides from bacterial membrane prolipoproteins. Hydrolyzes -Xaa-Yaa-Zaa-|-(S,diacylglyceryl)Cys-, in which Xaa is hydrophobic (preferably Leu), and Yaa (Ala or Ser) and Zaa (Gly or Ala) have small, neutral side chains.. It participates in protein modification; lipoprotein biosynthesis (signal peptide cleavage). Its function is as follows. This protein specifically catalyzes the removal of signal peptides from prolipoproteins. This chain is Lipoprotein signal peptidase, found in Pseudomonas syringae pv. tomato (strain ATCC BAA-871 / DC3000).